The sequence spans 266 residues: uncharacterized protein (266 aa).

The region spanning 35–131 (VLVGEGVLVK…WMLHIERCVT (97 aa)) is the PH domain. The FYVE-type zinc-finger motif lies at 152 to 212 (DGEAVKCMVC…VCDHCFDSLS (61 aa)). The Zn(2+) site is built by Cys158, Cys161, Cys175, Cys178, Cys183, Cys186, Cys204, and Cys207. Residues 213 to 266 (SATPGQEESEPKTGNRLHHEDSSSDSEDEVNGSGRSSNESRPTFYREDVQQPAT) form a disordered region. Composition is skewed to basic and acidic residues over residues 221–234 (SEPK…HEDS) and 256–266 (FYREDVQQPAT).

This is an uncharacterized protein from Caenorhabditis elegans.